Here is a 498-residue protein sequence, read N- to C-terminus: MAKYAAAIDQGTTSTRCMIFDHSGNVICYDQKEHEQIYPRPGWVEHSPDEIWERTQSVIRGALSKGGLSASDIVAVGITNQRETTVVWNRKTGRPVYNAIVWQDTRTDQICNELAADGGQDRFRAKVGLPLATYFSGPKIRWILDNVPDAREAAEAGDVVFGNIDTFLTWWLTGGPNGGVHVTDVTNASRTMLMNLETLDWDDEILSVMGIPRQMLPKIVPSSMVYGTAVGELAGVPVAGILGDQQAAMVGQTCFDVGEAKNTYGTGSFMLLNTGTKIVPSKSGLLTTVCYKFGDQPAVYALEGSIAITGALVQWLRDNLGLITTSAEVEALANLVEDNGGIYFVPAFSGLFAPYWRSDARGVIVGLTRYVNKGHLARAVLEATAYQTREVLDAMEQDSGVKLTALKVDGGMVYNNTLMQFQADILGVPVIRPKVAETTSLGAAYAAGLAVGFWSNTDEMRANWGVDHTWTPQMDEATRERLYRGWKKAVTRTFDWVE.

Position 12 (threonine 12) interacts with ADP. Residues threonine 12, threonine 13, and serine 14 each contribute to the ATP site. Threonine 12 is a binding site for sn-glycerol 3-phosphate. Position 16 (arginine 16) interacts with ADP. The sn-glycerol 3-phosphate site is built by arginine 82, glutamate 83, tyrosine 134, and aspartate 244. Positions 82, 83, 134, 244, and 245 each coordinate glycerol. The ADP site is built by threonine 266 and glycine 310. Threonine 266, glycine 310, glutamine 314, and glycine 411 together coordinate ATP. ADP-binding residues include glycine 411 and asparagine 415.

It belongs to the FGGY kinase family.

It catalyses the reaction glycerol + ATP = sn-glycerol 3-phosphate + ADP + H(+). It participates in polyol metabolism; glycerol degradation via glycerol kinase pathway; sn-glycerol 3-phosphate from glycerol: step 1/1. Inhibited by fructose 1,6-bisphosphate (FBP). Functionally, key enzyme in the regulation of glycerol uptake and metabolism. Catalyzes the phosphorylation of glycerol to yield sn-glycerol 3-phosphate. The sequence is that of Glycerol kinase from Chloroflexus aggregans (strain MD-66 / DSM 9485).